The chain runs to 499 residues: Cysteine--tRNA ligase (499 aa).

Position 29 (C29) interacts with Zn(2+). Positions 31 to 41 (VTVYDLCHLGH) match the 'HIGH' region motif. Zn(2+) contacts are provided by C213, H238, and E242. Residues 270-274 (KMSKS) carry the 'KMSKS' region motif. ATP is bound at residue K273.

It belongs to the class-I aminoacyl-tRNA synthetase family. As to quaternary structure, monomer. Zn(2+) is required as a cofactor.

The protein resides in the cytoplasm. It catalyses the reaction tRNA(Cys) + L-cysteine + ATP = L-cysteinyl-tRNA(Cys) + AMP + diphosphate. This Prochlorococcus marinus (strain MIT 9303) protein is Cysteine--tRNA ligase.